Reading from the N-terminus, the 580-residue chain is Putative monoterpene synthase 8 (580 aa).

Residues Met1–Met44 constitute a chloroplast transit peptide. Asp333, Asp337, Asp478, Thr482, and Glu486 together coordinate Mg(2+). The short motif at Asp333–Asp337 is the DDXXD motif element.

This sequence belongs to the terpene synthase family. Tpsg subfamily. In terms of assembly, monomer. Mg(2+) serves as cofactor. It depends on Mn(2+) as a cofactor. Confined to flowers.

The protein resides in the plastid. It localises to the chloroplast. The protein operates within secondary metabolite biosynthesis; terpenoid biosynthesis. Functionally, monoterpene synthase (mono-TPS) involved in the biosynthesis of monoterpenes natural products, constituent of coffee beverage aroma. This chain is Putative monoterpene synthase 8, found in Coffea arabica (Arabian coffee).